A 99-amino-acid chain; its full sequence is uncharacterized protein (99 aa).

Positions 1–17 (MMMNAFFPAMALMVLVG) are cleaved as a signal peptide. Cys-18 carries N-palmitoyl cysteine lipidation. The S-diacylglycerol cysteine moiety is linked to residue Cys-18.

Its subcellular location is the cell membrane. This is an uncharacterized protein from Shigella boydii serotype 4 (strain Sb227).